We begin with the raw amino-acid sequence, 200 residues long: 3-isopropylmalate dehydratase small subunit (200 aa).

It belongs to the LeuD family. LeuD type 1 subfamily. In terms of assembly, heterodimer of LeuC and LeuD.

It carries out the reaction (2R,3S)-3-isopropylmalate = (2S)-2-isopropylmalate. The protein operates within amino-acid biosynthesis; L-leucine biosynthesis; L-leucine from 3-methyl-2-oxobutanoate: step 2/4. Functionally, catalyzes the isomerization between 2-isopropylmalate and 3-isopropylmalate, via the formation of 2-isopropylmaleate. This is 3-isopropylmalate dehydratase small subunit from Campylobacter jejuni subsp. jejuni serotype O:6 (strain 81116 / NCTC 11828).